A 62-amino-acid chain; its full sequence is Temporin-1PLa (62 aa).

A signal peptide spans 1–22 (MFTSKKSLLLLFFLGTINLSLC). The propeptide occupies 23-45 (EEERDADEEERRDDPDEMNVEVE). Isoleucine 60 is modified (isoleucine amide).

As to expression, expressed by the skin glands.

It localises to the secreted. In terms of biological role, antimicrobial activity against the Gram-positive bacterium S.aureus. This Lithobates palustris (Pickerel frog) protein is Temporin-1PLa.